The sequence spans 373 residues: Phospho-N-acetylmuramoyl-pentapeptide-transferase (373 aa).

The next 10 helical transmembrane spans lie at Leu-28 to Tyr-48, Thr-72 to Ala-92, Leu-94 to Trp-114, Tyr-135 to Gln-155, Ile-177 to Ile-197, Gly-212 to Ser-232, Val-252 to His-272, Val-276 to Met-296, Ile-301 to Val-321, and Gln-350 to Leu-370.

It belongs to the glycosyltransferase 4 family. MraY subfamily. Mg(2+) serves as cofactor.

It is found in the cell inner membrane. It catalyses the reaction UDP-N-acetyl-alpha-D-muramoyl-L-alanyl-gamma-D-glutamyl-meso-2,6-diaminopimeloyl-D-alanyl-D-alanine + di-trans,octa-cis-undecaprenyl phosphate = di-trans,octa-cis-undecaprenyl diphospho-N-acetyl-alpha-D-muramoyl-L-alanyl-D-glutamyl-meso-2,6-diaminopimeloyl-D-alanyl-D-alanine + UMP. Its pathway is cell wall biogenesis; peptidoglycan biosynthesis. Functionally, catalyzes the initial step of the lipid cycle reactions in the biosynthesis of the cell wall peptidoglycan: transfers peptidoglycan precursor phospho-MurNAc-pentapeptide from UDP-MurNAc-pentapeptide onto the lipid carrier undecaprenyl phosphate, yielding undecaprenyl-pyrophosphoryl-MurNAc-pentapeptide, known as lipid I. This is Phospho-N-acetylmuramoyl-pentapeptide-transferase from Psychrobacter sp. (strain PRwf-1).